A 317-amino-acid polypeptide reads, in one-letter code: Sulfate adenylyltransferase subunit 2 (317 aa).

Disordered regions lie at residues 1–21 (MPDSRPDTELSNPQSAKAPLD) and 298–317 (RAIDRDQSGSMEKKKREGYF).

This sequence belongs to the PAPS reductase family. CysD subfamily. As to quaternary structure, heterodimer composed of CysD, the smaller subunit, and CysN.

The enzyme catalyses sulfate + ATP + H(+) = adenosine 5'-phosphosulfate + diphosphate. The protein operates within sulfur metabolism; hydrogen sulfide biosynthesis; sulfite from sulfate: step 1/3. In terms of biological role, with CysN forms the ATP sulfurylase (ATPS) that catalyzes the adenylation of sulfate producing adenosine 5'-phosphosulfate (APS) and diphosphate, the first enzymatic step in sulfur assimilation pathway. APS synthesis involves the formation of a high-energy phosphoric-sulfuric acid anhydride bond driven by GTP hydrolysis by CysN coupled to ATP hydrolysis by CysD. The protein is Sulfate adenylyltransferase subunit 2 of Rhizobium johnstonii (strain DSM 114642 / LMG 32736 / 3841) (Rhizobium leguminosarum bv. viciae).